The primary structure comprises 142 residues: Transcription antitermination protein NusB (142 aa).

It belongs to the NusB family.

Functionally, involved in transcription antitermination. Required for transcription of ribosomal RNA (rRNA) genes. Binds specifically to the boxA antiterminator sequence of the ribosomal RNA (rrn) operons. The protein is Transcription antitermination protein NusB of Borrelia garinii subsp. bavariensis (strain ATCC BAA-2496 / DSM 23469 / PBi) (Borreliella bavariensis).